Here is a 160-residue protein sequence, read N- to C-terminus: MSIIKKPDLTDPKLRAKLAKGMGHHYYGEPAWPNDILYMFPVVILGILACDVGLSILEPSVIGEPANPFATPLEILPEWYFFPTFNLLRVIPNKLVGVLSMASVPAGLITVPFIESVNKFQNPFRRPIATSVFLVGTIVAVWLGIGATMPLSKAITLGLF.

The next 3 helical transmembrane spans lie at I36–I56, L95–E115, and P127–A147.

The protein belongs to the cytochrome b family. PetD subfamily. As to quaternary structure, the 4 large subunits of the cytochrome b6-f complex are cytochrome b6, subunit IV (17 kDa polypeptide, petD), cytochrome f and the Rieske protein, while the 4 small subunits are petG, petL, petM and petN. The complex functions as a dimer.

Its subcellular location is the plastid. The protein localises to the chloroplast thylakoid membrane. In terms of biological role, component of the cytochrome b6-f complex, which mediates electron transfer between photosystem II (PSII) and photosystem I (PSI), cyclic electron flow around PSI, and state transitions. In Gracilaria tenuistipitata var. liui (Red alga), this protein is Cytochrome b6-f complex subunit 4.